A 596-amino-acid chain; its full sequence is Selenocysteine-specific elongation factor (596 aa).

The tr-type G domain occupies 5 to 217 (RVNVNVGVLG…LLTSQISIPT (213 aa)). The interval 14–21 (GHIDSGKT) is G1. G19, T21, and A22 together coordinate GDP. Residues G19, T21, and A22 each contribute to the GTP site. T21 serves as a coordination point for Mg(2+). The segment at 46-50 (GITLD) is G2. Mg(2+) contacts are provided by T48 and D92. The interval 92-95 (DCPG) is G3. A G4 region spans residues 146–149 (NKID). The GDP site is built by D149 and K187. 2 residues coordinate GTP: D149 and K187. The interval 185–187 (AAK) is G5. S537 is subject to Phosphoserine. A Phosphothreonine modification is found at T545. The Nuclear localization signal signature appears at 547–553 (ALKKRAR). The interval 548 to 573 (LKKRARAGRGEATRQEESAERSEPSQ) is disordered. The span at 555 to 571 (GRGEATRQEESAERSEP) shows a compositional bias: basic and acidic residues. The residue at position 556 (R556) is an Omega-N-methylarginine.

It belongs to the TRAFAC class translation factor GTPase superfamily. Classic translation factor GTPase family. SelB subfamily. Requires Mg(2+) as cofactor. It depends on Mn(2+) as a cofactor.

It localises to the cytoplasm. Its subcellular location is the nucleus. The catalysed reaction is GTP + H2O = GDP + phosphate + H(+). Its function is as follows. Translation factor required for the incorporation of the rare amino acid selenocysteine encoded by UGA codons. Replaces the eRF1-eRF3-GTP ternary complex for the insertion of selenocysteine directed by the UGA codon. Insertion of selenocysteine at UGA codons is mediated by SECISBP2 and EEFSEC: SECISBP2 (1) specifically binds the SECIS sequence once the 80S ribosome encounters an in-frame UGA codon and (2) contacts the RPS27A/eS31 of the 40S ribosome before ribosome stalling. (3) GTP-bound EEFSEC then delivers selenocysteinyl-tRNA(Sec) to the 80S ribosome and adopts a preaccommodated state conformation. (4) After GTP hydrolysis, EEFSEC dissociates from the assembly, selenocysteinyl-tRNA(Sec) accommodates, and peptide bond synthesis and selenoprotein elongation occur. The chain is Selenocysteine-specific elongation factor from Homo sapiens (Human).